The sequence spans 1043 residues: Probable inorganic carbon transporter subunit DabA (1043 aa).

The Zn(2+) site is built by cysteine 460, aspartate 462, histidine 719, and cysteine 734.

It belongs to the inorganic carbon transporter (TC 9.A.2) DabA family. Forms a complex with DabB. The cofactor is Zn(2+).

Its subcellular location is the cell inner membrane. Part of an energy-coupled inorganic carbon pump. This is Probable inorganic carbon transporter subunit DabA from Thiobacillus denitrificans (strain ATCC 25259 / T1).